The sequence spans 900 residues: Phosphoenolpyruvate carboxylase (900 aa).

Residues His140 and Lys568 contribute to the active site.

Belongs to the PEPCase type 1 family. Mg(2+) serves as cofactor.

It catalyses the reaction oxaloacetate + phosphate = phosphoenolpyruvate + hydrogencarbonate. In terms of biological role, forms oxaloacetate, a four-carbon dicarboxylic acid source for the tricarboxylic acid cycle. The polypeptide is Phosphoenolpyruvate carboxylase (Neisseria gonorrhoeae (strain ATCC 700825 / FA 1090)).